The sequence spans 363 residues: Probable endopolygalacturonase B (363 aa).

The signal sequence occupies residues 1–20; the sequence is MQLLQSSVIAATVGAALVAA. Positions 21 to 28 are excised as a propeptide; it reads VPVELEAR. A disulfide bond links cysteine 31 and cysteine 46. PbH1 repeat units follow at residues 158–187, 188–209, 210–230, 239–260, 268–290, and 302–347; these read SDNLNITDVTIDNSAGTAEGHNTDAFDVGS, STYINIDGATVYNQDDCLAINS, GSHITFTNGYCDGGHGLSIGS, VEDVTISNSKVVNSQNGVRIKT, VSNVKFEDITLSGITKYGLIVEQ, and TNGI…SITG. Asparagine 162 carries N-linked (GlcNAc...) asparagine glycosylation. Aspartate 202 acts as the Proton donor in catalysis. Cysteine 204 and cysteine 220 are oxidised to a cystine. Histidine 224 is a catalytic residue. Cystine bridges form between cysteine 330–cysteine 335 and cysteine 354–cysteine 363.

The protein belongs to the glycosyl hydrolase 28 family.

The protein resides in the secreted. It catalyses the reaction (1,4-alpha-D-galacturonosyl)n+m + H2O = (1,4-alpha-D-galacturonosyl)n + (1,4-alpha-D-galacturonosyl)m.. Functionally, involved in maceration and soft-rotting of plant tissue. Hydrolyzes the 1,4-alpha glycosidic bonds of de-esterified pectate in the smooth region of the plant cell wall. This Aspergillus flavus (strain ATCC 200026 / FGSC A1120 / IAM 13836 / NRRL 3357 / JCM 12722 / SRRC 167) protein is Probable endopolygalacturonase B (pgaB).